A 390-amino-acid polypeptide reads, in one-letter code: MSRSQEELEATLQIAKVNPEDLRSTVHCLSFSSEFTSGDYSLMELDDTLCKQIEAGDSLVIRGDKSDHAVLCSQDKTYDLKIADTSNLLLFIPGCKLPDQLPADQQPLSVIHCEIAGFSNHYWELRRCRPKLKKLKKLLMENTYNGPENESESSQETSLYTTEDLLSVIQSSTEELMDHLKAIHACNIKGIWRLLDFDYEMKLLNHITQLIDSESWSFSKVPLQVCLQELRSLEPEEMIEHCLTCYGKRLMEEGGDCFALDEDKICRATALMLLQNAVKFNLAEFQEVWQQSVPDGMNTRLDQLKGLALVDRTSRPETIFLLQTEDLPEDTQERFNTLFGMREKWTEADIAPYIQDLCGEKQTIGALLTKYARSSMQNGIKLFNSRRPLS.

It belongs to the DCC1 family. In terms of assembly, component of the ctf18-RFC complex which consists of ctf18, ctf8, dscc1 and the RFC complex.

The protein localises to the nucleus. Functionally, loads pcna onto primed templates regulating velocity, spacing and restart activity of replication forks. May couple DNA replication to sister chromatid cohesion. The protein is Sister chromatid cohesion protein DCC1 (dscc1) of Xenopus laevis (African clawed frog).